Here is a 332-residue protein sequence, read N- to C-terminus: Serpentine receptor class gamma-3 (332 aa).

7 consecutive transmembrane segments (helical) span residues 23-43, 72-92, 101-121, 144-164, 184-204, 231-251, and 263-283; these read FAYL…IWVS, LIFT…SEIV, IYYC…IFIA, IMLI…LISD, WASL…ITMV, AALI…FAFF, and YLRF…LLLV.

Belongs to the nematode receptor-like protein srg family.

The protein resides in the membrane. This Caenorhabditis elegans protein is Serpentine receptor class gamma-3 (srg-3).